Consider the following 363-residue polypeptide: MSDSSRSLIPSFLYSSDHRLFQATTMSTHLKSQPLISPTNSSVSSNGTSFAIATPNEKVEMYSPAYFAACTVAGMLSCGITHTAITPLDVIKCNMQIDPLKYKNITSAFKTTIKEQGLKGFTRGWSPTLLGYSAQGAFKYGLYEYAKKYYSDIVGPEYAAKYKTLIYLAGSASAEIVADVALCPMEAVKVRVQTQPGFARGLSDGLPKIIKSEGFRGLHKGLVPLWGRQIPYTMMKFATFENTVELIYKKVMPTPKEECSKPVQLGVSFAGGYIAGIFCAIISHPADNLVSFLNNSKGATVADAVKRLGLWGMLTRGLPLRIFMIGTLTGAQWVIYDAVKVLAGLPTTGGASPATALAPSVSA.

A helical membrane pass occupies residues 65–85 (AYFAACTVAGMLSCGITHTAI). Solcar repeat units lie at residues 65–149 (AYFA…AKKY), 162–246 (YKTL…TVEL), and 263–342 (VQLG…VKVL). The Mitochondrial matrix segment spans residues 86 to 123 (TPLDVIKCNMQIDPLKYKNITSAFKTTIKEQGLKGFTR). A helical transmembrane segment spans residues 124-143 (GWSPTLLGYSAQGAFKYGLY). The Mitochondrial intermembrane portion of the chain corresponds to 144–164 (EYAKKYYSDIVGPEYAAKYKT). A helical membrane pass occupies residues 165-185 (LIYLAGSASAEIVADVALCPM). Residues 186–220 (EAVKVRVQTQPGFARGLSDGLPKIIKSEGFRGLHK) lie on the Mitochondrial matrix side of the membrane. Residues 221–240 (GLVPLWGRQIPYTMMKFATF) form a helical membrane-spanning segment. Over 241–261 (ENTVELIYKKVMPTPKEECSK) the chain is Mitochondrial intermembrane. Residues 262–282 (PVQLGVSFAGGYIAGIFCAII) form a helical membrane-spanning segment. At 283–321 (SHPADNLVSFLNNSKGATVADAVKRLGLWGMLTRGLPLR) the chain is on the mitochondrial matrix side. Residues 322 to 342 (IFMIGTLTGAQWVIYDAVKVL) traverse the membrane as a helical segment. The Mitochondrial intermembrane segment spans residues 343 to 363 (AGLPTTGGASPATALAPSVSA).

Belongs to the mitochondrial carrier (TC 2.A.29) family. In terms of tissue distribution, expressed in leaves. Strong expression in senescent leaves.

It is found in the mitochondrion inner membrane. Functionally, transport of phosphate groups from the cytosol to the mitochondrial matrix. Mediates salt stress tolerance through an ATP-dependent pathway and via modulation of the gibberellin metabolism. The chain is Mitochondrial phosphate carrier protein 2, mitochondrial (MPT2) from Arabidopsis thaliana (Mouse-ear cress).